A 476-amino-acid chain; its full sequence is 3-isopropylmalate dehydratase large subunit (476 aa).

The [4Fe-4S] cluster site is built by Cys355, Cys416, and Cys419.

Belongs to the aconitase/IPM isomerase family. LeuC type 1 subfamily. As to quaternary structure, heterodimer of LeuC and LeuD. Requires [4Fe-4S] cluster as cofactor.

The enzyme catalyses (2R,3S)-3-isopropylmalate = (2S)-2-isopropylmalate. Its pathway is amino-acid biosynthesis; L-leucine biosynthesis; L-leucine from 3-methyl-2-oxobutanoate: step 2/4. Catalyzes the isomerization between 2-isopropylmalate and 3-isopropylmalate, via the formation of 2-isopropylmaleate. The sequence is that of 3-isopropylmalate dehydratase large subunit from Sphingopyxis alaskensis (strain DSM 13593 / LMG 18877 / RB2256) (Sphingomonas alaskensis).